The following is a 601-amino-acid chain: Rhizobactin siderophore biosynthesis protein RhbF (601 aa).

It belongs to the IucA/IucC family.

It participates in siderophore biosynthesis; rhizobactin biosynthesis. The sequence is that of Rhizobactin siderophore biosynthesis protein RhbF (rhbF) from Rhizobium meliloti (strain 1021) (Ensifer meliloti).